Reading from the N-terminus, the 394-residue chain is NAD(P)H-quinone oxidoreductase subunit H (394 aa).

This sequence belongs to the complex I 49 kDa subunit family. In terms of assembly, NDH-1 can be composed of about 15 different subunits; different subcomplexes with different compositions have been identified which probably have different functions.

The protein localises to the cellular thylakoid membrane. The catalysed reaction is a plastoquinone + NADH + (n+1) H(+)(in) = a plastoquinol + NAD(+) + n H(+)(out). It catalyses the reaction a plastoquinone + NADPH + (n+1) H(+)(in) = a plastoquinol + NADP(+) + n H(+)(out). Its function is as follows. NDH-1 shuttles electrons from an unknown electron donor, via FMN and iron-sulfur (Fe-S) centers, to quinones in the respiratory and/or the photosynthetic chain. The immediate electron acceptor for the enzyme in this species is believed to be plastoquinone. Couples the redox reaction to proton translocation, and thus conserves the redox energy in a proton gradient. Cyanobacterial NDH-1 also plays a role in inorganic carbon-concentration. The polypeptide is NAD(P)H-quinone oxidoreductase subunit H (Microcystis aeruginosa (strain NIES-843 / IAM M-2473)).